The chain runs to 172 residues: Small ribosomal subunit protein uS5 (172 aa).

In terms of domain architecture, S5 DRBM spans 17-80; it reads LREKMIAVNR…EEARRNMVKV (64 aa).

The protein belongs to the universal ribosomal protein uS5 family. Part of the 30S ribosomal subunit. Contacts proteins S4 and S8.

Functionally, with S4 and S12 plays an important role in translational accuracy. Located at the back of the 30S subunit body where it stabilizes the conformation of the head with respect to the body. The protein is Small ribosomal subunit protein uS5 of Verminephrobacter eiseniae (strain EF01-2).